The primary structure comprises 428 residues: Histidine--tRNA ligase (428 aa).

It belongs to the class-II aminoacyl-tRNA synthetase family. Homodimer.

It is found in the cytoplasm. The catalysed reaction is tRNA(His) + L-histidine + ATP = L-histidyl-tRNA(His) + AMP + diphosphate + H(+). This is Histidine--tRNA ligase from Bordetella bronchiseptica (strain ATCC BAA-588 / NCTC 13252 / RB50) (Alcaligenes bronchisepticus).